A 310-amino-acid polypeptide reads, in one-letter code: Upstream stimulatory factor 1 (310 aa).

Over residues 1 to 17 the composition is skewed to polar residues; sequence MKGQQKTAETEEGTVQI. Disordered stretches follow at residues 1-26 and 171-209; these read MKGQ…ATGE and QGGS…EVER. Residues 190-209 show a composition bias toward basic and acidic residues; sequence EAPRTTRDEKRRAQHNEVER. The bHLH domain maps to 199–254; the sequence is KRRAQHNEVERRRRDKINNWIVQLSKIIPDCSMESTKSGQSKGGILSKACDYIQEL. The tract at residues 271–292 is leucine-zipper; it reads LQLDNDVLRQQVEDLKNKNLLL. Lys-306 is covalently cross-linked (Glycyl lysine isopeptide (Lys-Gly) (interchain with G-Cter in SUMO2)).

In terms of assembly, efficient DNA binding requires dimerization with another bHLH protein. Binds DNA as a homodimer or a heterodimer (USF1/USF2). Interacts with varicella-zoster virus IE62 protein.

Its subcellular location is the nucleus. Transcription factor that binds to a symmetrical DNA sequence (E-boxes) (5'-CACGTG-3') that is found in a variety of viral and cellular promoters. The sequence is that of Upstream stimulatory factor 1 (USF1) from Homo sapiens (Human).